A 559-amino-acid polypeptide reads, in one-letter code: Formate--tetrahydrofolate ligase (559 aa).

67 to 74 is a binding site for ATP; it reads TPAGEGKS.

The protein belongs to the formate--tetrahydrofolate ligase family.

The enzyme catalyses (6S)-5,6,7,8-tetrahydrofolate + formate + ATP = (6R)-10-formyltetrahydrofolate + ADP + phosphate. It functions in the pathway one-carbon metabolism; tetrahydrofolate interconversion. This is Formate--tetrahydrofolate ligase from Lactobacillus delbrueckii subsp. bulgaricus (strain ATCC BAA-365 / Lb-18).